The following is a 228-amino-acid chain: Latherin (228 aa).

Residues 1–20 (MLKVSCLFVLLCGLLVPSSA) form the signal peptide. A disulfide bridge connects residues cysteine 153 and cysteine 196.

This sequence belongs to the BPI/LBP/Plunc superfamily. Plunc family. In terms of assembly, monomer. No sign of N-X-[ST] acceptor site even though reported as N-glycosylated. In terms of tissue distribution, found in sweat (at protein level).

Its subcellular location is the secreted. Its function is as follows. Major protein in sweat, has surfactant properties. Has a role in temperature regulation by having a capacity to make hydrophobic surfaces wettable and so can function in promoting spreading and evaporation of sweat. In Equus caballus (Horse), this protein is Latherin (LATH).